A 205-amino-acid chain; its full sequence is GTP cyclohydrolase-2 (205 aa).

GTP is bound at residue 49-53 (RIHSE). Residues cysteine 54, cysteine 65, and cysteine 67 each coordinate Zn(2+). GTP is bound by residues glutamine 70, 92-94 (EGR), and threonine 114. Aspartate 126 (proton acceptor) is an active-site residue. Catalysis depends on arginine 128, which acts as the Nucleophile. Threonine 149 and lysine 154 together coordinate GTP.

The protein belongs to the GTP cyclohydrolase II family. It depends on Zn(2+) as a cofactor.

The enzyme catalyses GTP + 4 H2O = 2,5-diamino-6-hydroxy-4-(5-phosphoribosylamino)-pyrimidine + formate + 2 phosphate + 3 H(+). It functions in the pathway cofactor biosynthesis; riboflavin biosynthesis; 5-amino-6-(D-ribitylamino)uracil from GTP: step 1/4. Catalyzes the conversion of GTP to 2,5-diamino-6-ribosylamino-4(3H)-pyrimidinone 5'-phosphate (DARP), formate and pyrophosphate. The chain is GTP cyclohydrolase-2 from Shewanella sediminis (strain HAW-EB3).